Consider the following 427-residue polypeptide: Endothelin-1 receptor (427 aa).

The N-terminal stretch at 1–20 is a signal peptide; it reads METFCFRVSFWVALLGCVIS. Topologically, residues 21–80 are extracellular; the sequence is DNPESHSTNLSTHVDDFTTFRGTEFSLVVTTHRPTNLALPSNGSMHNYCPQQTKITSAFK. 2 N-linked (GlcNAc...) asparagine glycosylation sites follow: asparagine 29 and asparagine 62. The helical transmembrane segment at 81 to 102 threads the bilayer; the sequence is YINTVISCTIFIVGMVGNATLL. Topologically, residues 103–112 are cytoplasmic; the sequence is RIIYQNKCMR. A helical transmembrane segment spans residues 113–132; the sequence is NGPNALIASLALGDLIYVVI. At 133 to 159 the chain is on the extracellular side; it reads DLPINVFKLLAGRWPFENHDFGVFLCK. Cysteine 158 and cysteine 239 form a disulfide bridge. A helical membrane pass occupies residues 160–181; it reads LFPFLQKSSVGITVLNLCALSV. Over 182 to 205 the chain is Cytoplasmic; that stretch reads DRYRAVASWSRVQGIGIPLVTAIE. A helical transmembrane segment spans residues 206–229; sequence IVSIWILSFILAIPEAIGFVMVPF. Residues 230–256 lie on the Extracellular side of the membrane; it reads EYKGEEHKTCMLNATSKFMEFYQDVKD. The chain crosses the membrane as a helical span at residues 257-278; the sequence is WWLFGFYFCMPLVCTAIFYTLM. The Cytoplasmic portion of the chain corresponds to 279–306; it reads TCEMLNRRNGSLRIALSEHLKQRREVAK. A helical membrane pass occupies residues 307–328; it reads TVFCLVVIFALCWFPLHLSRIL. Residues 329–347 lie on the Extracellular side of the membrane; it reads KKTVYDEMDKNRCELLSFL. A helical transmembrane segment spans residues 348-372; it reads LLMDYIGINLATMNSCINPIALYFV. The Cytoplasmic segment spans residues 373 to 427; sequence SKKFKNCFQSCLCCCCYQSKSLMTSVPMNGTSIQWKNHEQNNHNTERSSHKDSIN. Residue serine 425 is modified to Phosphoserine.

Belongs to the G-protein coupled receptor 1 family. Endothelin receptor subfamily. EDNRA sub-subfamily. As to quaternary structure, interacts with HDAC7 and KAT5.

It localises to the cell membrane. In terms of biological role, receptor for endothelin-1. Mediates its action by association with G proteins that activate a phosphatidylinositol-calcium second messenger system. The rank order of binding affinities for ET-A is: ET1 &gt; ET2 &gt;&gt; ET3. The sequence is that of Endothelin-1 receptor from Sus scrofa (Pig).